We begin with the raw amino-acid sequence, 447 residues long: Glutamate--tRNA ligase 1 (447 aa).

Residues 10–20 (PSPTGMLHVGN) carry the 'HIGH' region motif. A 'KMSKS' region motif is present at residues 240–244 (KISKR). An ATP-binding site is contributed by Lys243.

It belongs to the class-I aminoacyl-tRNA synthetase family. Glutamate--tRNA ligase type 1 subfamily. Monomer.

It is found in the cytoplasm. It carries out the reaction tRNA(Glu) + L-glutamate + ATP = L-glutamyl-tRNA(Glu) + AMP + diphosphate. Its function is as follows. Catalyzes the attachment of glutamate to tRNA(Glu) in a two-step reaction: glutamate is first activated by ATP to form Glu-AMP and then transferred to the acceptor end of tRNA(Glu). The chain is Glutamate--tRNA ligase 1 from Rickettsia akari (strain Hartford).